A 247-amino-acid polypeptide reads, in one-letter code: tRNA (guanine-N(1)-)-methyltransferase (247 aa).

S-adenosyl-L-methionine contacts are provided by residues Gly-117 and 136 to 141; that span reads LGDFVL.

This sequence belongs to the RNA methyltransferase TrmD family. Homodimer.

It is found in the cytoplasm. The enzyme catalyses guanosine(37) in tRNA + S-adenosyl-L-methionine = N(1)-methylguanosine(37) in tRNA + S-adenosyl-L-homocysteine + H(+). Specifically methylates guanosine-37 in various tRNAs. This Myxococcus xanthus (strain DK1622) protein is tRNA (guanine-N(1)-)-methyltransferase.